A 308-amino-acid chain; its full sequence is Acetaldehyde dehydrogenase 2 (308 aa).

9–12 serves as a coordination point for NAD(+); sequence SGNI. The Acyl-thioester intermediate role is filled by Cys-127. Residues 158-166 and Asn-286 each bind NAD(+); that span reads SAGPGTRAN.

Belongs to the acetaldehyde dehydrogenase family.

The catalysed reaction is acetaldehyde + NAD(+) + CoA = acetyl-CoA + NADH + H(+). This Parafrankia sp. (strain EAN1pec) protein is Acetaldehyde dehydrogenase 2.